A 956-amino-acid chain; its full sequence is ATPase 11, plasma membrane-type (956 aa).

The Cytoplasmic portion of the chain corresponds to 1–65 (MGDKEEVLEA…EKKESKFLKF (65 aa)). Residues 66-85 (LGFMWNPLSWVMEAAAIMAI) traverse the membrane as a helical segment. Over 86 to 97 (ALANGGGKPPDW) the chain is Extracellular. The helical transmembrane segment at 98-118 (QDFVGIITLLVINSTISFIEE) threads the bilayer. At 119–247 (NNAGNAAAAL…GHFQQVLTAI (129 aa)) the chain is on the cytoplasmic side. The helical transmembrane segment at 248 to 268 (GNFCICSIAVGMIIEIVVMYP) threads the bilayer. The Extracellular portion of the chain corresponds to 269–277 (IQHRAYRPG). A helical transmembrane segment spans residues 278–295 (IDNLLVLLIGGIPIAMPT). Residues 296-647 (VLSVTMAIGS…TSRAIFQRMK (352 aa)) are Cytoplasmic-facing. Aspartate 333 (4-aspartylphosphate intermediate) is an active-site residue. Mg(2+) contacts are provided by aspartate 592 and aspartate 596. A helical membrane pass occupies residues 648 to 669 (NYTIYAVSITIRIVLGFMLLAL). Topologically, residues 670 to 674 (IWKFD) are extracellular. The chain crosses the membrane as a helical span at residues 675–697 (FPPFMVLIIAILNDGTIMTISKD). At 698–713 (RVKPSPLPDSWKLSEI) the chain is on the cytoplasmic side. Residues 714-734 (FATGVVFGSYMAMMTVIFFWA) form a helical membrane-spanning segment. Over 735–759 (AYKTDFFPRTFGVSTLEKTAHDDFR) the chain is Extracellular. The chain crosses the membrane as a helical span at residues 760–780 (KLASAIYLQVSIISQALIFVT). At 781-792 (RSRSWSYVERPG) the chain is on the cytoplasmic side. The chain crosses the membrane as a helical span at residues 793–813 (MLLVVAFILAQLVATLIAVYA). Residues 814–821 (NWSFAAIE) are Extracellular-facing. Residues 822–842 (GIGWGWAGVIWLYNIVFYIPL) traverse the membrane as a helical segment. The Cytoplasmic portion of the chain corresponds to 843-956 (DIIKFLIRYA…IETIQQAYTV (114 aa)). Threonine 889 bears the Phosphothreonine mark. Serine 938 carries the phosphoserine modification. The interaction with 14-3-3 proteins stretch occupies residues 954–956 (YTV). Threonine 955 is subject to Phosphothreonine.

It belongs to the cation transport ATPase (P-type) (TC 3.A.3) family. Type IIIA subfamily. Binds to 14-3-3 proteins. The binding is induced by phosphorylation of Thr-955. Binding to 14-3-3 proteins activates the H(+)-ATPase. In terms of tissue distribution, expressed in guard cells, mesophyll cells, leaves and roots.

It localises to the membrane. It catalyses the reaction ATP + H2O + H(+)(in) = ADP + phosphate + 2 H(+)(out). Functionally, the plasma membrane H(+) ATPase of plants and fungi generates a proton gradient that drives the active transport of nutrients by H(+)-symport. The resulting external acidification and/or internal alkinization may mediate growth responses. The chain is ATPase 11, plasma membrane-type (AHA11) from Arabidopsis thaliana (Mouse-ear cress).